The primary structure comprises 764 residues: Hemocyte protein-glutamine gamma-glutamyltransferase (764 aa).

Catalysis depends on residues cysteine 343, histidine 402, and aspartate 425. 4 residues coordinate Ca(2+): asparagine 465, aspartate 467, glutamate 522, and glutamate 527.

It belongs to the transglutaminase superfamily. Transglutaminase family. Requires Ca(2+) as cofactor. In terms of tissue distribution, mainly expressed in hemocytes, hepatopancreas, and gastric tissues. On the other hand nothing was detected in the heart, intestine and muscle.

Its subcellular location is the membrane. The enzyme catalyses L-glutaminyl-[protein] + L-lysyl-[protein] = [protein]-L-lysyl-N(6)-5-L-glutamyl-[protein] + NH4(+). Catalyzes the cross-linking of proteins and the conjugation of polyamines to proteins. This Tachypleus tridentatus (Japanese horseshoe crab) protein is Hemocyte protein-glutamine gamma-glutamyltransferase.